Reading from the N-terminus, the 377-residue chain is 3-dehydroquinate synthase (377 aa).

NAD(+) contacts are provided by residues 115–119, 139–140, Lys-152, and Lys-161; these read GVIGD and TS. Zn(2+) contacts are provided by Glu-194, His-256, and His-275.

It belongs to the sugar phosphate cyclases superfamily. Dehydroquinate synthase family. It depends on NAD(+) as a cofactor. Co(2+) serves as cofactor. Zn(2+) is required as a cofactor.

It localises to the cytoplasm. The enzyme catalyses 7-phospho-2-dehydro-3-deoxy-D-arabino-heptonate = 3-dehydroquinate + phosphate. It participates in metabolic intermediate biosynthesis; chorismate biosynthesis; chorismate from D-erythrose 4-phosphate and phosphoenolpyruvate: step 2/7. Functionally, catalyzes the conversion of 3-deoxy-D-arabino-heptulosonate 7-phosphate (DAHP) to dehydroquinate (DHQ). In Rhizobium meliloti (strain 1021) (Ensifer meliloti), this protein is 3-dehydroquinate synthase.